Consider the following 290-residue polypeptide: Sodium/potassium-transporting ATPase subunit beta-2 (290 aa).

The Cytoplasmic segment spans residues 1–39 (MVIQKEKKSCGQVVEEWKEFVWNPRTHQFMGRTGTSWAF). Residues 40–67 (ILLFYLVFYGFLTAMFTLTMWVMLQTVS) form a helical; Signal-anchor for type II membrane protein membrane-spanning segment. Residues 68–290 (DHTPKYQDRL…VAFKLRINKT (223 aa)) lie on the Extracellular side of the membrane. Residues Asn96 and Asn118 are each glycosylated (N-linked (GlcNAc...) asparagine). An intrachain disulfide couples Cys129 to Cys150. N-linked (GlcNAc...) asparagine glycosylation is found at Asn153 and Asn159. Residues Cys160 and Cys177 are joined by a disulfide bond. N-linked (GlcNAc...) asparagine glycosylation is found at Asn193, Asn197, and Asn238. The interval 193–290 (NQSMNVTCAG…VAFKLRINKT (98 aa)) is immunoglobulin-like. Cys200 and Cys261 form a disulfide bridge.

It belongs to the X(+)/potassium ATPases subunit beta family. In terms of assembly, the sodium/potassium-transporting ATPase is composed of a catalytic alpha subunit, an auxiliary non-catalytic beta subunit and an additional regulatory subunit. Interacts with BSG.

The protein localises to the cell membrane. This is the non-catalytic component of the active enzyme, which catalyzes the hydrolysis of ATP coupled with the exchange of Na(+) and K(+) ions across the plasma membrane. The exact function of the beta-2 subunit is not known. In terms of biological role, mediates cell adhesion of neurons and astrocytes, and promotes neurite outgrowth. The sequence is that of Sodium/potassium-transporting ATPase subunit beta-2 (ATP1B2) from Ochotona curzoniae (Black-lipped pika).